Reading from the N-terminus, the 514-residue chain is Glutamate--cysteine ligase, chloroplastic (514 aa).

The N-terminal 55 residues, 1–55 (MALLSQAGGAYTVPSGHVSSRTGTKTVSGCVNVLRMKETYVSSYSRTLSTKSMLK), are a transit peptide targeting the chloroplast. 2 cysteine pairs are disulfide-bonded: C178–C398 and C341–C356.

It belongs to the carboxylate-amine ligase family. Glutamate--cysteine ligase type 2 subfamily. In terms of assembly, homodimer or monomer when oxidized or reduced, respectively. In terms of processing, the Cys-178-Cys-398 disulfide bridge is known to modulate the enzyme activity according to the redox status. The oxidized form constitutes the active enzyme.

The protein localises to the plastid. It localises to the chloroplast. It catalyses the reaction L-cysteine + L-glutamate + ATP = gamma-L-glutamyl-L-cysteine + ADP + phosphate + H(+). It functions in the pathway sulfur metabolism; glutathione biosynthesis; glutathione from L-cysteine and L-glutamate: step 1/2. Participates in the detoxification process. The chain is Glutamate--cysteine ligase, chloroplastic (GSH1) from Brassica juncea (Indian mustard).